The chain runs to 129 residues: MARVKRAVNAHKKRRSVLKASKGYRGQRSRLYRKAKEQQLHSLNYAYRDRRARKGEFRKLWISRINAAARANDITYNRLIQGLKAAGVEVDRKNLADIAITDPAAFTALVDVARAALPEDVNAPSGEAA.

This sequence belongs to the bacterial ribosomal protein bL20 family.

Its function is as follows. Binds directly to 23S ribosomal RNA and is necessary for the in vitro assembly process of the 50S ribosomal subunit. It is not involved in the protein synthesizing functions of that subunit. This chain is Large ribosomal subunit protein bL20, found in Mycobacterium marinum (strain ATCC BAA-535 / M).